The sequence spans 99 residues: Leydig cell tumor 10 kDa protein homolog (99 aa).

A disordered region spans residues 1–37 (MAQGQRKFQARKPAKSKTAATASEKNRGPRKGGRVIA). Positions 28-37 (GPRKGGRVIA) are enriched in basic residues.

This sequence belongs to the UPF0390 family.

Its function is as follows. May have a potential role in hypercalcemia of malignancy. The protein is Leydig cell tumor 10 kDa protein homolog of Pongo abelii (Sumatran orangutan).